The chain runs to 289 residues: Protein SET (289 aa).

Residues 1-42 (MAPKRQSAILPQPKKPRPVAAPKLEDKSASPGLPKGEKEQQE) are disordered. Ala2 carries the n,N,N-trimethylalanine modification. Phosphoserine is present on Ser7. Pro11 carries the N6-acetyllysine modification. Phosphoserine is present on Lys15. Lys23 is modified (N6-acetyllysine). Phosphoserine occurs at positions 24, 28, and 62. The tract at residues 31–77 (PGLPKGEKEQQEAIEHIDEVQNEIDRLNEQASEEILKVEQKYNKLRQ) is dimerization. Lys67 bears the N6-acetyllysine mark. An earmuff domain region spans residues 78–224 (PFFQKRSELI…ELGEVIKDDI (147 aa)). Tyr145 is subject to Phosphotyrosine. Lys149 is subject to N6-acetyllysine. A Glycyl lysine isopeptide (Lys-Gly) (interchain with G-Cter in ubiquitin) cross-link involves residue Lys153. 2 disordered regions span residues 157-206 (LNES…TWFT) and 235-289 (PDMD…GEDD). Residues 168 to 180 (TEIKWKSGKDLTK) are compositionally biased toward basic and acidic residues. Lys171 carries the N6-acetyllysine modification. Residues 236 to 289 (DMDDEEGEAEDDDDDDEEEEGLEDIDEEGDEDEGEEDDDEDEGEEGEEDEGEDD) are compositionally biased toward acidic residues.

It belongs to the nucleosome assembly protein (NAP) family. Headphone-shaped homodimer. Isoform 1 and isoform 2 interact directly with each other and with ANP32A within the tripartite INHAT (inhibitor of acetyltransferases) complex. Isoform 1 and isoform 2 interact also with histones. Isoform 2 is a omponent of the SET complex, composed of at least ANP32A, APEX1, HMGB2, NME1, SET and TREX1, but not NME2 or TREX2. Within this complex, directly interacts with ANP32A, NME1, HMGB2 and TREX1; the interaction with ANP32A is enhanced after cleavage. Interacts with APBB1, CHTOP, SETBP1, SGO1. Post-translationally, isoform 2 is phosphorylated on Ser-15 and Ser-24. In terms of processing, isoform 2 is acetylated on Lys-11. Some glutamate residues are glycylated by TTLL8. This modification occurs exclusively on glutamate residues and results in a glycine chain on the gamma-carboxyl group. Post-translationally, N-terminus of isoform 1 is methylated by METTL11A/NTM1. Mainly trimethylated. In terms of processing, cleaved after Lys-176 by GZMA. The cleavage inhibits its nucleosome assembly activity and disrupts the inhibition on NME1. In terms of tissue distribution, widely expressed, with higher expression in brain, thymus, spleen and bone marrow, and lower expression in heart, liver and muscle.

It localises to the cytoplasm. It is found in the cytosol. The protein resides in the endoplasmic reticulum. Its subcellular location is the nucleus. The protein localises to the nucleoplasm. In terms of biological role, multitasking protein, involved in apoptosis, transcription, nucleosome assembly and histone chaperoning. Isoform 2 anti-apoptotic activity is mediated by inhibition of the GZMA-activated DNase, NME1. In the course of cytotoxic T-lymphocyte (CTL)-induced apoptosis, GZMA cleaves SET, disrupting its binding to NME1 and releasing NME1 inhibition. Isoform 1 and isoform 2 are potent inhibitors of protein phosphatase 2A. Isoform 1 and isoform 2 inhibit EP300/CREBBP and PCAF-mediated acetylation of histones (HAT) and nucleosomes, most probably by masking the accessibility of lysines of histones to the acetylases. The predominant target for inhibition is histone H4. HAT inhibition leads to silencing of HAT-dependent transcription and prevents active demethylation of DNA. Both isoforms stimulate DNA replication of the adenovirus genome complexed with viral core proteins; however, isoform 2 specific activity is higher. The sequence is that of Protein SET (Set) from Rattus norvegicus (Rat).